Consider the following 213-residue polypeptide: Receptor-binding cancer antigen expressed on SiSo cells (213 aa).

The Extracellular segment spans residues 1-7; the sequence is MAITQFR. The chain crosses the membrane as a helical; Signal-anchor for type III membrane protein span at residues 8–27; it reads LFKVCTCLATVFSFLKRLIC. The Cytoplasmic portion of the chain corresponds to 28–213; the sequence is RSGRGRKLSG…EQNKIGVKLS (186 aa). Phosphoserine is present on serine 36. The residue at position 41 (threonine 41) is a Phosphothreonine. At tyrosine 94 the chain carries Phosphotyrosine. Residues 163-211 are a coiled coil; that stretch reads EDAAWQAEEVLRQQKIADREKRAAEQQRKKMEKEAQRLMKKEQNKIGVK. Over residues 179 to 206 the composition is skewed to basic and acidic residues; sequence ADREKRAAEQQRKKMEKEAQRLMKKEQN. The segment at 179–213 is disordered; sequence ADREKRAAEQQRKKMEKEAQRLMKKEQNKIGVKLS.

As to quaternary structure, homodimer. As to expression, widely expressed. Expressed in heart, brain, spleen, liver, kidney and testis.

It localises to the golgi apparatus membrane. May participate in suppression of cell proliferation and induces apoptotic cell death through activation of interleukin-1-beta converting enzyme (ICE)-like proteases. The protein is Receptor-binding cancer antigen expressed on SiSo cells (Ebag9) of Mus musculus (Mouse).